Reading from the N-terminus, the 101-residue chain is Chaperone modulatory protein CbpM (101 aa).

It belongs to the CbpM family.

Functionally, interacts with CbpA and inhibits both the DnaJ-like co-chaperone activity and the DNA binding activity of CbpA. Together with CbpA, modulates the activity of the DnaK chaperone system. Does not inhibit the co-chaperone activity of DnaJ. The sequence is that of Chaperone modulatory protein CbpM from Salmonella paratyphi A (strain ATCC 9150 / SARB42).